The sequence spans 289 residues: Phytoene synthase (289 aa).

Belongs to the phytoene/squalene synthase family. Requires ATP as cofactor. The cofactor is Mn(2+). It depends on Mg(2+) as a cofactor.

The protein operates within carotenoid biosynthesis; phytoene biosynthesis. Involved in the biosynthesis of carotenoids. Catalyzes the condensation of two molecules of geranylgeranyl diphosphate (GGPP) to give prephytoene diphosphate (PPPP) and the subsequent rearrangement of the cyclopropylcarbinyl intermediate to yield phytoene. The sequence is that of Phytoene synthase (crtB) from Thermus thermophilus (strain ATCC BAA-163 / DSM 7039 / HB27).